Reading from the N-terminus, the 229-residue chain is DNA repair protein RecO (229 aa).

This sequence belongs to the RecO family.

Involved in DNA repair and RecF pathway recombination. This chain is DNA repair protein RecO, found in Legionella pneumophila (strain Lens).